The chain runs to 90 residues: Acylphosphatase (90 aa).

The region spanning 3–90 is the Acylphosphatase-like domain; that stretch reads AVHMNASGQV…FEGQDFIVKY (88 aa). Catalysis depends on residues R18 and N36.

Belongs to the acylphosphatase family.

The enzyme catalyses an acyl phosphate + H2O = a carboxylate + phosphate + H(+). This is Acylphosphatase (acyP) from Pediococcus pentosaceus (strain ATCC 25745 / CCUG 21536 / LMG 10740 / 183-1w).